The primary structure comprises 764 residues: 5-methyltetrahydropteroyltriglutamate--homocysteine methyltransferase (764 aa).

5-methyltetrahydropteroyltri-L-glutamate contacts are provided by residues 16–19 (RELK) and Lys-115. Residues 435–437 (IGS) and Glu-488 each bind L-homocysteine. L-methionine contacts are provided by residues 435–437 (IGS) and Glu-488. 5-methyltetrahydropteroyltri-L-glutamate is bound by residues 519-520 (RC) and Trp-565. Residue Asp-603 participates in L-homocysteine binding. An L-methionine-binding site is contributed by Asp-603. Glu-609 provides a ligand contact to 5-methyltetrahydropteroyltri-L-glutamate. Positions 645, 647, and 669 each coordinate Zn(2+). The Proton donor role is filled by His-698. Cys-730 provides a ligand contact to Zn(2+).

This sequence belongs to the vitamin-B12 independent methionine synthase family. Zn(2+) is required as a cofactor.

It catalyses the reaction 5-methyltetrahydropteroyltri-L-glutamate + L-homocysteine = tetrahydropteroyltri-L-glutamate + L-methionine. It participates in amino-acid biosynthesis; L-methionine biosynthesis via de novo pathway; L-methionine from L-homocysteine (MetE route): step 1/1. Functionally, catalyzes the transfer of a methyl group from 5-methyltetrahydrofolate to homocysteine resulting in methionine formation. The protein is 5-methyltetrahydropteroyltriglutamate--homocysteine methyltransferase of Burkholderia thailandensis (strain ATCC 700388 / DSM 13276 / CCUG 48851 / CIP 106301 / E264).